The following is a 1048-amino-acid chain: Probable histidine kinase 2 (1048 aa).

The Cytoplasmic portion of the chain corresponds to 1 to 16; the sequence is MREVEEVSKWRRRCCY. The helical transmembrane segment at 17 to 37 threads the bilayer; the sequence is FWILFPLAVIATCMTITVVTF. Topologically, residues 38-336 are extracellular; that stretch reads CSSTMYMTEV…AMVGVFRRGG (299 aa). Residues 337 to 357 traverse the membrane as a helical segment; that stretch reads VTMVAVACAAAAAATVACVLM. At 358–1048 the chain is on the cytoplasmic side; that stretch reads ARALRRAVAR…AVHGVCKGKN (691 aa). A Histidine kinase domain is found at 398-662; it reads SASHDIRSAL…CFGFNVLLKT (265 aa). Residue His401 is modified to Phosphohistidine; by autocatalysis. One can recognise a Response regulatory domain in the interval 912–1044; the sequence is HVLLVEDTLV…RIVEAVHGVC (133 aa). The residue at position 975 (Asp975) is a 4-aspartylphosphate.

In terms of processing, activation probably requires a transfer of a phosphate group between a His in the transmitter domain and an Asp of the receiver domain.

Its subcellular location is the cell membrane. It catalyses the reaction ATP + protein L-histidine = ADP + protein N-phospho-L-histidine.. Its function is as follows. Cytokinin receptor related to bacterial two-component regulators. Functions as a histidine kinase and transmits the stress signal to a downstream MAPK cascade. This is Probable histidine kinase 2 from Oryza sativa subsp. indica (Rice).